Reading from the N-terminus, the 122-residue chain is Ubiquitin-related modifier 1 (122 aa).

Positions 33–48 (PSTVPADNNTSVTTKD) are enriched in polar residues. Residues 33–52 (PSTVPADNNTSVTTKDAASP) are disordered. Residue Gly122 is modified to 1-thioglycine. Gly122 participates in a covalent cross-link: Glycyl lysine isopeptide (Gly-Lys) (interchain with K-? in acceptor proteins).

Belongs to the URM1 family. Post-translationally, C-terminal thiocarboxylation occurs in 2 steps, it is first acyl-adenylated (-COAMP) via the hesA/moeB/thiF part of UBA4, then thiocarboxylated (-COSH) via the rhodanese domain of UBA4.

The protein localises to the cytoplasm. It participates in tRNA modification; 5-methoxycarbonylmethyl-2-thiouridine-tRNA biosynthesis. Functionally, acts as a sulfur carrier required for 2-thiolation of mcm(5)S(2)U at tRNA wobble positions of cytosolic tRNA(Lys), tRNA(Glu) and tRNA(Gln). Serves as sulfur donor in tRNA 2-thiolation reaction by being thiocarboxylated (-COSH) at its C-terminus by the MOCS3 homolog UBA4. The sulfur is then transferred to tRNA to form 2-thiolation of mcm(5)S(2)U. Prior mcm(5) tRNA modification by the elongator complex is required for 2-thiolation. Also acts as a ubiquitin-like protein (UBL) that is covalently conjugated via an isopeptide bond to lysine residues of target proteins such as AHP1. The thiocarboxylated form serves as substrate for conjugation and oxidative stress specifically induces the formation of UBL-protein conjugates. The chain is Ubiquitin-related modifier 1 from Laccaria bicolor (strain S238N-H82 / ATCC MYA-4686) (Bicoloured deceiver).